Here is a 138-residue protein sequence, read N- to C-terminus: Large-conductance mechanosensitive channel (138 aa).

Transmembrane regions (helical) follow at residues 19–39 and 81–101; these read VGVIIGAAFGAIVTSLVGDVI and GSFLTLTINFIIIAFVLFLVI.

This sequence belongs to the MscL family. Homopentamer.

The protein localises to the cell inner membrane. Channel that opens in response to stretch forces in the membrane lipid bilayer. May participate in the regulation of osmotic pressure changes within the cell. The chain is Large-conductance mechanosensitive channel from Bradyrhizobium diazoefficiens (strain JCM 10833 / BCRC 13528 / IAM 13628 / NBRC 14792 / USDA 110).